The primary structure comprises 245 residues: Probable metal transport system ATP-binding protein CPn_0542/CP_0210/CPj0542/CpB0563 (245 aa).

The ABC transporter domain occupies 5 to 240; that stretch reads ILAEGLAFRY…CCHPYKNQEF (236 aa). 39 to 46 contributes to the ATP binding site; sequence GPNGGGKS.

Belongs to the ABC transporter superfamily.

The protein resides in the cell inner membrane. Part of an ATP-driven transport system CPn0541/CPn0542/CPn0543 for a metal. Probably responsible for energy coupling to the transport system. This chain is Probable metal transport system ATP-binding protein CPn_0542/CP_0210/CPj0542/CpB0563, found in Chlamydia pneumoniae (Chlamydophila pneumoniae).